The following is a 199-amino-acid chain: uncharacterized protein (199 aa).

A disordered region spans residues 1 to 30 (MEDAAAPGRTEGVLERQGAPPAAGQGGALV). Residues 71–101 (RANATNKLTVIAEQIQHLQEQARKVLEDAHR) adopt a coiled-coil conformation.

This is an uncharacterized protein from Homo sapiens (Human).